The chain runs to 528 residues: Na(+)/H(+) antiporter NhaB (528 aa).

The next 11 membrane-spanning stretches (helical) occupy residues 10–30, 63–83, 96–116, 131–165, 204–224, 240–260, 305–325, 359–379, 391–411, 449–469, and 476–496; these read IGNFLGNSPKWYKIAILSFLI, YPLQPGGLLAIEAVAIGMTSA, VLLLLVFMVAGIYFMKQLLLF, VSLMFCLTSAFLSAFLDALTVIAVIIAVAVGFYAI, LLMHAGVGTALGGVCTMVGEP, FVVRMSPVTVPVLIAGILTCL, VLVGVWLIAGLALHLASVGLV, LAVFFAVVAVIIDQHLFAPVI, LVIFYIANGLLSMVSDNVFVG, ATPNGQAAFLFLLTSALAPLI, and MVWMALPYTIVLSVVGVLAIE.

It belongs to the NhaB Na(+)/H(+) (TC 2.A.34) antiporter family.

Its subcellular location is the cell inner membrane. It catalyses the reaction 2 Na(+)(in) + 3 H(+)(out) = 2 Na(+)(out) + 3 H(+)(in). In terms of biological role, na(+)/H(+) antiporter that extrudes sodium in exchange for external protons. The chain is Na(+)/H(+) antiporter NhaB from Shewanella sp. (strain W3-18-1).